The chain runs to 498 residues: ATP synthase subunit beta, chloroplastic (498 aa).

An ATP-binding site is contributed by 172 to 179 (GGAGVGKT).

Belongs to the ATPase alpha/beta chains family. In terms of assembly, F-type ATPases have 2 components, CF(1) - the catalytic core - and CF(0) - the membrane proton channel. CF(1) has five subunits: alpha(3), beta(3), gamma(1), delta(1), epsilon(1). CF(0) has four main subunits: a(1), b(1), b'(1) and c(9-12).

It localises to the plastid. Its subcellular location is the chloroplast thylakoid membrane. The enzyme catalyses ATP + H2O + 4 H(+)(in) = ADP + phosphate + 5 H(+)(out). Functionally, produces ATP from ADP in the presence of a proton gradient across the membrane. The catalytic sites are hosted primarily by the beta subunits. This chain is ATP synthase subunit beta, chloroplastic, found in Magnolia tripetala (Umbrella-tree).